The primary structure comprises 205 residues: SCO2-like protein RF_0960 (205 aa).

Residues cysteine 82, cysteine 86, and histidine 172 each contribute to the Cu cation site.

The protein belongs to the SCO1/2 family.

The polypeptide is SCO2-like protein RF_0960 (Rickettsia felis (strain ATCC VR-1525 / URRWXCal2) (Rickettsia azadi)).